A 1082-amino-acid polypeptide reads, in one-letter code: RNA-directed RNA polymerase (1082 aa).

A RdRp catalytic domain is found at L498 to I670.

This sequence belongs to the reoviridae RNA-directed RNA polymerase family. As to quaternary structure, interacts with VP3 (Potential). Interacts with VP2; this interaction activates VP1. Interacts with NSP5; this interaction is probably necessary for the formation of functional virus factories. Interacts with NSP2; this interaction is weak. The cofactor is Mg(2+).

The protein localises to the virion. It catalyses the reaction RNA(n) + a ribonucleoside 5'-triphosphate = RNA(n+1) + diphosphate. In terms of biological role, RNA-directed RNA polymerase that is involved in both transcription and genome replication. Together with VP3 capping enzyme, forms an enzyme complex positioned near the channels situated at each of the five-fold vertices of the core. Following infection, the outermost layer of the virus is lost, leaving a double-layered particle (DLP) made up of the core and VP6 shell. VP1 then catalyzes the transcription of fully conservative plus-strand genomic RNAs that are extruded through the DLP's channels into the cytoplasm where they function as mRNAs for translation of viral proteins. One copy of each of the viral (+)RNAs is also recruited during core assembly, together with newly synthesized polymerase complexes and VP2. The polymerase of these novo-formed particles catalyzes the synthesis of complementary minus-strands leading to dsDNA formation. To do so, the polymerase specifically recognizes conserved 3' sequence(s) in plus-strand RNA templates. Once dsRNA synthesis is complete, the polymerase switches to the transcriptional mode, thus providing secondary transcription. The polypeptide is RNA-directed RNA polymerase (Rotavirus C (strain RVC/Pig/United States/Cowden/1980) (RV-C)).